Reading from the N-terminus, the 167-residue chain is MSEAIIAKKAEQVAIVADKMKAAASIVVVDSRGLTVDQDTVLRRNLRESGVEFKVIKNSILSRAAEKAGLEDLKKLFVGPSAVAFSNEDVIAPAKVISEFAKGAEALEIKGGVVDGAITSVEEINALASLPNKEGMLSMLLSVLQAPVRNVAYAVKAVAESKEDGAA.

Belongs to the universal ribosomal protein uL10 family. Part of the ribosomal stalk of the 50S ribosomal subunit. The N-terminus interacts with L11 and the large rRNA to form the base of the stalk. The C-terminus forms an elongated spine to which L12 dimers bind in a sequential fashion forming a multimeric L10(L12)X complex.

Its function is as follows. Forms part of the ribosomal stalk, playing a central role in the interaction of the ribosome with GTP-bound translation factors. This Streptococcus thermophilus (strain CNRZ 1066) protein is Large ribosomal subunit protein uL10.